Consider the following 372-residue polypeptide: Aminomethyltransferase (372 aa).

Belongs to the GcvT family. In terms of assembly, the glycine cleavage system is composed of four proteins: P, T, L and H.

The enzyme catalyses N(6)-[(R)-S(8)-aminomethyldihydrolipoyl]-L-lysyl-[protein] + (6S)-5,6,7,8-tetrahydrofolate = N(6)-[(R)-dihydrolipoyl]-L-lysyl-[protein] + (6R)-5,10-methylene-5,6,7,8-tetrahydrofolate + NH4(+). The glycine cleavage system catalyzes the degradation of glycine. In Synechocystis sp. (strain ATCC 27184 / PCC 6803 / Kazusa), this protein is Aminomethyltransferase.